A 547-amino-acid chain; its full sequence is Chaperonin GroEL (547 aa).

Residues 30–33, lysine 51, 87–91, glycine 415, and aspartate 495 contribute to the ATP site; these read TLGP and DGTTT.

The protein belongs to the chaperonin (HSP60) family. In terms of assembly, forms a cylinder of 14 subunits composed of two heptameric rings stacked back-to-back. Interacts with the co-chaperonin GroES.

The protein resides in the cytoplasm. The catalysed reaction is ATP + H2O + a folded polypeptide = ADP + phosphate + an unfolded polypeptide.. Together with its co-chaperonin GroES, plays an essential role in assisting protein folding. The GroEL-GroES system forms a nano-cage that allows encapsulation of the non-native substrate proteins and provides a physical environment optimized to promote and accelerate protein folding. This is Chaperonin GroEL from Ralstonia nicotianae (strain ATCC BAA-1114 / GMI1000) (Ralstonia solanacearum).